A 235-amino-acid polypeptide reads, in one-letter code: Ribosomal RNA small subunit methyltransferase G (235 aa).

S-adenosyl-L-methionine is bound by residues glycine 74, phenylalanine 79, 97-99 (EAT), 125-126 (AE), and arginine 144.

The protein belongs to the methyltransferase superfamily. RNA methyltransferase RsmG family.

It is found in the cytoplasm. Its function is as follows. Specifically methylates the N7 position of a guanine in 16S rRNA. This is Ribosomal RNA small subunit methyltransferase G from Dehalococcoides mccartyi (strain ATCC BAA-2100 / JCM 16839 / KCTC 5957 / BAV1).